The sequence spans 333 residues: MNEKHLTYADSGVDIEKEESTIKALTNGMTYKREGIGAPLTSIGHYAGLIDFGEYALAMATDGVGSKVLIANEMKRWNTVGIDCIAMNVNDLLAIGAEPISFVDYLALEKHSDDFASQIGEGLVKGAEISRMSIVGGETATLPEIVNGFDLAGTCLGMVKKEEVITGEKVRLGDVLVGIPSNGVHSNGYTLVRDIIKESGHSYHEDFSYNTETTIGDELLIPTRIYMEVLDVIKECDVHGLAHITGSGLLKLKRVTGLGFDFTDPIEPGNIFKFLQEEGNVDDLEMYRTFNMGMGFLIILPEADAEKAAEMTGGKIVGKIVESGIRVRDLEIV.

The protein belongs to the AIR synthase family.

The protein localises to the cytoplasm. It carries out the reaction 2-formamido-N(1)-(5-O-phospho-beta-D-ribosyl)acetamidine + ATP = 5-amino-1-(5-phospho-beta-D-ribosyl)imidazole + ADP + phosphate + H(+). Its pathway is purine metabolism; IMP biosynthesis via de novo pathway; 5-amino-1-(5-phospho-D-ribosyl)imidazole from N(2)-formyl-N(1)-(5-phospho-D-ribosyl)glycinamide: step 2/2. This Methanococcoides burtonii (strain DSM 6242 / NBRC 107633 / OCM 468 / ACE-M) protein is Phosphoribosylformylglycinamidine cyclo-ligase.